We begin with the raw amino-acid sequence, 1196 residues long: Probable cation-transporting ATPase 13A4 (1196 aa).

Residues 1–31 (MGHFEKGQHALLNEGEENEMEIFGYRTQGCR) lie on the Cytoplasmic side of the membrane. The stretch at 32–52 (KSLCLAGSIFSFGILPLVFYW) is an intramembrane region. Over 53–197 (RPAWHVWAHC…DVEVTPIWKL (145 aa)) the chain is Cytoplasmic. The helical transmembrane segment at 198–218 (LIKEVLNPFYIFQLFSVCLWF) threads the bilayer. Residues 219–223 (SEDYK) lie on the Lumenal side of the membrane. Residues 224 to 244 (EYAFAIIIMSIISISLTVYDL) traverse the membrane as a helical segment. Topologically, residues 245–400 (REQSVKLHHL…NFQLYRDAIR (156 aa)) are cytoplasmic. The chain crosses the membrane as a helical span at residues 401-421 (FLLCLVGTATIGMIYTLCVYV). Residues 422–436 (LSGEPPEEVVRKALD) are Lumenal-facing. A helical membrane pass occupies residues 437-457 (VITIAVPPALPAALTTGIIYA). Over 458 to 900 (QRRLKKRGIF…KEGRAALVTS (443 aa)) the chain is Cytoplasmic. Asp486 functions as the 4-aspartylphosphate intermediate in the catalytic mechanism. Mg(2+)-binding residues include Asp848 and Asp852. Residues 901 to 921 (FCMFKYMALYSMIQYVGVLLL) traverse the membrane as a helical segment. Topologically, residues 922–932 (YWETNSLSNYQ) are lumenal. The helical transmembrane segment at 933-953 (FLFQDLAITTLIGVTMNLNGA) threads the bilayer. Residues 954-972 (YPKLVPFRPAGRLISPPLL) are Cytoplasmic-facing. A helical transmembrane segment spans residues 973–993 (LSVIFNILLSLAMHIAGFILV). Over 994 to 1035 (QRQPWYSVEIHSACTVQNESISELTMSPTAPEKMESNSTFTS) the chain is Lumenal. Residues 1036-1056 (FENTTVWFLGTINCITVALVF) form a helical membrane-spanning segment. At 1057–1070 (SKGKPFRQPTYTNY) the chain is on the cytoplasmic side. Residues 1071 to 1091 (IFVLVLIIQLGVCLFILFADI) form a helical membrane-spanning segment. Over 1092 to 1109 (PELYRRLDLLCTPVLWRA) the chain is Lumenal. The chain crosses the membrane as a helical span at residues 1110–1130 (SIVIMLSLNFIVSLVAEEAVI). Over 1131–1196 (ENRALWMMIK…PVFESNEEQL (66 aa)) the chain is Cytoplasmic.

Belongs to the cation transport ATPase (P-type) (TC 3.A.3) family. Type V subfamily. As to expression, expressed in heart, placenta, liver, skeletal muscles, and pancreas. Lower levels of expression are also detected in brain, lung and kidney. Weakly expressed in the adult brain. Expression in fetal brain is higher than in adult brain, with levels similar to several other fetal tissues including spleen and skeletal muscle. In adult brain expressed at low levels in all tissues examined, including the temporal lobe and putamen. Highly expressed in the respiratory and integumentary systems.

Its subcellular location is the early endosome membrane. The protein localises to the late endosome membrane. It localises to the recycling endosome membrane. The catalysed reaction is ATP + H2O = ADP + phosphate + H(+). The sequence is that of Probable cation-transporting ATPase 13A4 (ATP13A4) from Homo sapiens (Human).